Consider the following 822-residue polypeptide: Molybdenum cofactor sulfurase (822 aa).

Lys239 is subject to N6-(pyridoxal phosphate)lysine. Residue Cys401 is part of the active site. The tract at residues 633-666 is disordered; the sequence is TRISNPTRSSRRSQRALMPGSFPEDPSPTSEQPP. The MOSC domain occupies 643–820; it reads RRSQRALMPG…VMVGDVVTPQ (178 aa).

It belongs to the class-V pyridoxal-phosphate-dependent aminotransferase family. MOCOS subfamily. The cofactor is pyridoxal 5'-phosphate.

The enzyme catalyses Mo-molybdopterin + L-cysteine + AH2 = thio-Mo-molybdopterin + L-alanine + A + H2O. The protein operates within cofactor biosynthesis; molybdopterin biosynthesis. Functionally, sulfurates the molybdenum cofactor. Sulfation of molybdenum is essential for xanthine dehydrogenase (XDH) and aldehyde oxidase (ADO) enzymes in which molybdenum cofactor is liganded by 1 oxygen and 1 sulfur atom in active form. This is Molybdenum cofactor sulfurase from Aspergillus oryzae (strain ATCC 42149 / RIB 40) (Yellow koji mold).